We begin with the raw amino-acid sequence, 143 residues long: Protein Wnt-1 (143 aa).

Residue Ser-1 is the site of O-palmitoleoyl serine; by PORCN attachment. Residues 38–81 (EGVRGNSNRGDRGDRRDRGDRSDNGGTEANFQPYNSNHKPPGPR) are disordered. Residues 46 to 60 (RGDRGDRRDRGDRSD) are compositionally biased toward basic and acidic residues. Residues 64 to 75 (TEANFQPYNSNH) show a composition bias toward polar residues. Cys-109 and Cys-124 are oxidised to a cystine. N-linked (GlcNAc...) asparagine glycosylation is found at Asn-110 and Asn-111.

It belongs to the Wnt family. In terms of processing, palmitoleoylation is required for efficient binding to frizzled receptors. Palmitoleoylation is necessary for proper trafficking to cell surface. Depalmitoleoylated by NOTUM, leading to inhibit Wnt signaling pathway.

The protein localises to the secreted. Its subcellular location is the extracellular space. The protein resides in the extracellular matrix. Its function is as follows. Ligand for members of the frizzled family of seven transmembrane receptors. Probable developmental protein. The chain is Protein Wnt-1 (WNT-1) from Evasterias troschelii (Mottled sea star).